The sequence spans 1386 residues: DNA-directed RNA polymerase subunit beta' (1386 aa).

Residues Cys-75, Cys-77, Cys-90, and Cys-93 each coordinate Zn(2+). Asp-466, Asp-468, and Asp-470 together coordinate Mg(2+). 4 residues coordinate Zn(2+): Cys-809, Cys-883, Cys-890, and Cys-893.

Belongs to the RNA polymerase beta' chain family. In terms of assembly, the RNAP catalytic core consists of 2 alpha, 1 beta, 1 beta' and 1 omega subunit. When a sigma factor is associated with the core the holoenzyme is formed, which can initiate transcription. Mg(2+) serves as cofactor. Requires Zn(2+) as cofactor.

It catalyses the reaction RNA(n) + a ribonucleoside 5'-triphosphate = RNA(n+1) + diphosphate. Its function is as follows. DNA-dependent RNA polymerase catalyzes the transcription of DNA into RNA using the four ribonucleoside triphosphates as substrates. This chain is DNA-directed RNA polymerase subunit beta', found in Oleidesulfovibrio alaskensis (strain ATCC BAA-1058 / DSM 17464 / G20) (Desulfovibrio alaskensis).